We begin with the raw amino-acid sequence, 273 residues long: 3-methyl-2-oxobutanoate hydroxymethyltransferase (273 aa).

Residues Asp-49 and Asp-88 each coordinate Mg(2+). Residues 49–50, Asp-88, and Lys-118 contribute to the 3-methyl-2-oxobutanoate site; that span reads DS. Glu-120 serves as a coordination point for Mg(2+). The Proton acceptor role is filled by Glu-187.

Belongs to the PanB family. Homodecamer; pentamer of dimers. Requires Mg(2+) as cofactor.

It is found in the cytoplasm. The catalysed reaction is 3-methyl-2-oxobutanoate + (6R)-5,10-methylene-5,6,7,8-tetrahydrofolate + H2O = 2-dehydropantoate + (6S)-5,6,7,8-tetrahydrofolate. Its pathway is cofactor biosynthesis; (R)-pantothenate biosynthesis; (R)-pantoate from 3-methyl-2-oxobutanoate: step 1/2. In terms of biological role, catalyzes the reversible reaction in which hydroxymethyl group from 5,10-methylenetetrahydrofolate is transferred onto alpha-ketoisovalerate to form ketopantoate. The protein is 3-methyl-2-oxobutanoate hydroxymethyltransferase of Rhizobium etli (strain ATCC 51251 / DSM 11541 / JCM 21823 / NBRC 15573 / CFN 42).